The primary structure comprises 278 residues: Dehydrogenase/reductase SDR family member 4 (278 aa).

36-60 is a binding site for NADP(+); the sequence is LVTASTDGIGFAIARRLAQDGAHVV. Residue Lys92 is modified to N6-acetyllysine; alternate. Lys92 carries the post-translational modification N6-succinyllysine; alternate. Lys105 carries the post-translational modification N6-acetyllysine. Ser169 serves as a coordination point for substrate. The Proton acceptor role is filled by Tyr182. NADP(+) is bound at residue Lys186. N6-acetyllysine; alternate is present on Lys216. Lys216 carries the post-translational modification N6-succinyllysine; alternate. Ser220 is modified (phosphoserine). 2 positions are modified to N6-succinyllysine: Lys227 and Lys234. Positions 276–278 match the Peroxisomal targeting signal motif; it reads SRL.

The protein belongs to the short-chain dehydrogenases/reductases (SDR) family. Homotetramer.

It localises to the peroxisome. The catalysed reaction is a secondary alcohol + NADP(+) = a ketone + NADPH + H(+). It catalyses the reaction 3beta-hydroxy-5beta-pregnane-20-one + NADP(+) = 5beta-pregnan-3,20-dione + NADPH + H(+). It carries out the reaction 5beta-dihydrotestosterone + NADPH + H(+) = 5beta-androstane-3beta,17beta-diol + NADP(+). The enzyme catalyses 5beta-androstane-3,17-dione + NADPH + H(+) = 3beta-hydroxy-5beta-androstane-17-one + NADP(+). The catalysed reaction is isatin + NADPH + H(+) = 3-hydroxyindolin-2-one + NADP(+). It catalyses the reaction lithocholate + NADP(+) = 3-oxo-5beta-cholan-24-oate + NADPH + H(+). It carries out the reaction 3-oxo-5beta-cholan-24-oate + NADPH + H(+) = isolithocholate + NADP(+). In terms of biological role, NADPH-dependent oxidoreductase which catalyzes the reduction of a variety of compounds bearing carbonyl groups including ketosteroids, alpha-dicarbonyl compounds, aldehydes, aromatic ketones and quinones. Reduces 3-ketosteroids and benzil into 3beta-hydroxysteroids and R-benzoin, respectively, in contrast to the stereoselectivity of non-primate DHRS4s which produce 3alpha-hydroxysteroids and S-benzoin. Diplays low activity toward all-trans-retinal and no activity toward 9-cis-retinal as compared to non-primate mammals. In the reverse reaction, catalyze the NAD-dependent oxidation of 3beta-hydroxysteroids and alcohol, but with much lower efficiency. Involved in the metabolism of 3beta-hydroxysteroids, isatin and xenobiotic carbonyl compounds. The polypeptide is Dehydrogenase/reductase SDR family member 4 (DHRS4) (Pongo abelii (Sumatran orangutan)).